A 762-amino-acid polypeptide reads, in one-letter code: 5-methyltetrahydropteroyltriglutamate--homocysteine methyltransferase (762 aa).

Residues 17–20 (REWK) and K111 contribute to the 5-methyltetrahydropteroyltri-L-glutamate site. L-homocysteine is bound by residues 435 to 437 (IGS) and E488. L-methionine is bound by residues 435 to 437 (IGS) and E488. Residues 519–520 (RC) and W565 contribute to the 5-methyltetrahydropteroyltri-L-glutamate site. D603 is an L-homocysteine binding site. L-methionine is bound at residue D603. Position 609 (E609) interacts with 5-methyltetrahydropteroyltri-L-glutamate. Residues H645, C647, and E669 each contribute to the Zn(2+) site. Catalysis depends on H698, which acts as the Proton donor. C730 provides a ligand contact to Zn(2+).

It belongs to the vitamin-B12 independent methionine synthase family. Zn(2+) serves as cofactor.

The catalysed reaction is 5-methyltetrahydropteroyltri-L-glutamate + L-homocysteine = tetrahydropteroyltri-L-glutamate + L-methionine. The protein operates within amino-acid biosynthesis; L-methionine biosynthesis via de novo pathway; L-methionine from L-homocysteine (MetE route): step 1/1. Catalyzes the transfer of a methyl group from 5-methyltetrahydrofolate to homocysteine resulting in methionine formation. The protein is 5-methyltetrahydropteroyltriglutamate--homocysteine methyltransferase of Bacillus anthracis (strain A0248).